The primary structure comprises 234 residues: Large ribosomal subunit protein uL1 (234 aa).

This sequence belongs to the universal ribosomal protein uL1 family. Part of the 50S ribosomal subunit.

Functionally, binds directly to 23S rRNA. The L1 stalk is quite mobile in the ribosome, and is involved in E site tRNA release. Protein L1 is also a translational repressor protein, it controls the translation of the L11 operon by binding to its mRNA. This chain is Large ribosomal subunit protein uL1, found in Maridesulfovibrio salexigens (strain ATCC 14822 / DSM 2638 / NCIMB 8403 / VKM B-1763) (Desulfovibrio salexigens).